The primary structure comprises 163 residues: Epithelial membrane protein 3 (163 aa).

The chain crosses the membrane as a helical span at residues 4–24; sequence LLLVVSALHILILILLFVATL. N-linked (GlcNAc...) asparagine glycosylation is found at N49 and N56. 3 helical membrane-spanning segments follow: residues 66–86, 100–120, and 139–159; these read VQVLMVLSLILCCLSFILFMF, TGFCQLCTSVAVFTGALIYAI, and FALAWVAFPLALASGIIYIHL.

The protein belongs to the PMP-22/EMP/MP20 family.

The protein resides in the membrane. Probably involved in cell proliferation and cell-cell interactions. The chain is Epithelial membrane protein 3 (EMP3) from Bos taurus (Bovine).